The sequence spans 168 residues: ATP synthase F(1) complex subunit delta, mitochondrial (168 aa).

A mitochondrion-targeting transit peptide spans 1-22 (MLPSALLRRPGLGRLVRQVRLY). Residues Lys136 and Lys165 each carry the N6-acetyllysine; alternate modification. Residues Lys136 and Lys165 each carry the N6-succinyllysine; alternate modification.

This sequence belongs to the ATPase epsilon chain family. In terms of assembly, component of the ATP synthase complex composed at least of ATP5F1A/subunit alpha, ATP5F1B/subunit beta, ATP5MC1/subunit c (homooctomer), MT-ATP6/subunit a, MT-ATP8/subunit 8, ATP5ME/subunit e, ATP5MF/subunit f, ATP5MG/subunit g, ATP5MK/subunit k, ATP5MJ/subunit j, ATP5F1C/subunit gamma, ATP5F1D/subunit delta, ATP5F1E/subunit epsilon, ATP5PF/subunit F6, ATP5PB/subunit b, ATP5PD/subunit d, ATP5PO/subunit OSCP. ATP synthase complex consists of a soluble F(1) head domain (subunits alpha(3) and beta(3)) - the catalytic core - and a membrane F(0) domain - the membrane proton channel (subunits c, a, 8, e, f, g, k and j). These two domains are linked by a central stalk (subunits gamma, delta, and epsilon) rotating inside the F1 region and a stationary peripheral stalk (subunits F6, b, d, and OSCP). Component of a complex composed at least by ATPIF1, ATP5F1A, ATP5F1B, ATP5F1C AND ATP5F1E.

It localises to the mitochondrion. The protein resides in the mitochondrion inner membrane. Subunit delta, of the mitochondrial membrane ATP synthase complex (F(1)F(0) ATP synthase or Complex V) that produces ATP from ADP in the presence of a proton gradient across the membrane which is generated by electron transport complexes of the respiratory chain. ATP synthase complex consist of a soluble F(1) head domain - the catalytic core - and a membrane F(1) domain - the membrane proton channel. These two domains are linked by a central stalk rotating inside the F(1) region and a stationary peripheral stalk. During catalysis, ATP synthesis in the catalytic domain of F(1) is coupled via a rotary mechanism of the central stalk subunits to proton translocation. In vivo, can only synthesize ATP although its ATP hydrolase activity can be activated artificially in vitro. With the central stalk subunit gamma, is essential for the biogenesis of F(1) catalytic part of the ATP synthase complex namely in the formation of F1 assembly intermediate. The chain is ATP synthase F(1) complex subunit delta, mitochondrial from Bos taurus (Bovine).